An 82-amino-acid polypeptide reads, in one-letter code: Musculoskeletal embryonic nuclear protein 1 (82 aa).

2 disordered regions span residues 1-33 and 49-82; these read MSQA…LTKN and QAGS…SVFG. Phosphoserine is present on Ser-2. Residues 10-18 carry the Nuclear localization signal motif; sequence PIKKKRPPV.

This sequence belongs to the MUSTN1 family. As to expression, expression in skeletal muscle is reduced during limb unloading but increases during the active recovery phase that follows.

The protein localises to the nucleus. It is found in the cytoplasm. It localises to the secreted. The protein resides in the extracellular space. Required for chondrocyte development and proliferation. Plays a role in myoblast differentiation and fusion. Modulates skeletal muscle extracellular matrix composition. Plays a role in skeletal muscle function. Plays a role in glucose homeostasis. This chain is Musculoskeletal embryonic nuclear protein 1 (MUSTN1), found in Homo sapiens (Human).